A 301-amino-acid chain; its full sequence is Envoplakin-like protein (301 aa).

A coiled-coil region spans residues 1 to 88 (MQASADQVER…ERVTQECAEY (88 aa)). Disordered regions lie at residues 18-41 (RLQQDRLNSEQSQALQHQQETGSS) and 118-166 (GLRR…PEPI). Positions 26-41 (SEQSQALQHQQETGSS) are enriched in polar residues. A compositionally biased stretch (basic and acidic residues) spans 136–151 (GAQHRAEGDQRPRRAA).

Belongs to the plakin or cytolinker family.

In Homo sapiens (Human), this protein is Envoplakin-like protein (EVPLL).